A 652-amino-acid polypeptide reads, in one-letter code: Na(+)/H(+) antiporter NhaA 3 (652 aa).

The tract at residues 1–428 is na(+)/H(+) antiporter NhaA; the sequence is MTGEIPRGRR…GASLTTWLVF (428 aa). 11 helical membrane-spanning segments follow: residues 32-52, 78-98, 114-134, 142-162, 173-193, 200-220, 227-249, 306-326, 342-362, 376-396, and 411-431; these read ETGS…WVNL, LRFW…GLEV, MLPL…YLAF, VGWG…LAVL, FLLT…AIAY, MALF…AAGV, LLLG…VVGL, HPWA…GVVV, GVLF…SMLV, WAAI…ALLI, and VGIL…FRLA. In terms of domain architecture, Thioredoxin spans 429–623; the sequence is RLAARLAPAR…LSAAVMSAFA (195 aa). Residues 626–652 are disordered; it reads RLRPEGGREPDHRSEAGSEQPDEEPGT. Basic and acidic residues predominate over residues 627–641; the sequence is LRPEGGREPDHRSEA.

It in the N-terminal section; belongs to the NhaA Na(+)/H(+) (TC 2.A.33) antiporter family.

It localises to the cell membrane. The catalysed reaction is Na(+)(in) + 2 H(+)(out) = Na(+)(out) + 2 H(+)(in). In terms of biological role, na(+)/H(+) antiporter that extrudes sodium in exchange for external protons. The polypeptide is Na(+)/H(+) antiporter NhaA 3 (Salinispora tropica (strain ATCC BAA-916 / DSM 44818 / JCM 13857 / NBRC 105044 / CNB-440)).